Consider the following 385-residue polypeptide: Trichodiene synthase (385 aa).

Belongs to the trichodiene synthase family.

The catalysed reaction is (2E,6E)-farnesyl diphosphate = trichodiene + diphosphate. It functions in the pathway sesquiterpene biosynthesis; trichothecene biosynthesis. Its function is as follows. TS is a member of the terpene cyclase group of enzymes. It catalyzes the isomerization and cyclization of farnesyl pyro-phosphate to form trichodiene, the first cyclic intermediate in the biosynthetic pathway for trichothecenes. It serves to branch trichothecene biosynthesis from the isoprenoid pathway. In Paramyrothecium roridum (Myrothecium leaf spot fungus), this protein is Trichodiene synthase (TRI5).